We begin with the raw amino-acid sequence, 74 residues long: Neuropeptide-like protein 33 (74 aa).

Positions Met-1–Ala-21 are cleaved as a signal peptide. The residue at position 72 (Tyr-72) is a Tyrosine amide.

It belongs to the YARP (YGGW-amide related peptide) family. Expressed in hypoderm.

It is found in the secreted. May have antifungic activity against D.coniospora. The chain is Neuropeptide-like protein 33 (nlp-33) from Caenorhabditis elegans.